The following is a 267-amino-acid chain: Acyl-[acyl-carrier-protein]--UDP-N-acetylglucosamine O-acyltransferase (267 aa).

The protein belongs to the transferase hexapeptide repeat family. LpxA subfamily. As to quaternary structure, homotrimer.

It localises to the cytoplasm. It catalyses the reaction a (3R)-hydroxyacyl-[ACP] + UDP-N-acetyl-alpha-D-glucosamine = a UDP-3-O-[(3R)-3-hydroxyacyl]-N-acetyl-alpha-D-glucosamine + holo-[ACP]. It participates in glycolipid biosynthesis; lipid IV(A) biosynthesis; lipid IV(A) from (3R)-3-hydroxytetradecanoyl-[acyl-carrier-protein] and UDP-N-acetyl-alpha-D-glucosamine: step 1/6. Involved in the biosynthesis of lipid A, a phosphorylated glycolipid that anchors the lipopolysaccharide to the outer membrane of the cell. This chain is Acyl-[acyl-carrier-protein]--UDP-N-acetylglucosamine O-acyltransferase, found in Cupriavidus necator (strain ATCC 17699 / DSM 428 / KCTC 22496 / NCIMB 10442 / H16 / Stanier 337) (Ralstonia eutropha).